A 259-amino-acid polypeptide reads, in one-letter code: MAIAPNTRVLVAGYGLPAEFCVTTLIGMGVEIDKIAVATHREDNRNCGLHSMLRLRNIQFTTAAANSEEFYEFGANFDPDMIISMHYRSLIPGRFLKLAKKGSVNLHPSLLPAYRGTNSVAWVIINGESETGFSYHRMDENFDTGAILLQERISVEETDTAFSLFHRQIARAMLRLEEVILKLDQGDPGFAQLGEASYYARELPFGGVIDPRWSEVQIDRFIRAMFFPPFPPAVLKIDGKVYYVPSIDIYRSLMRGIPS.

(6S)-5,6,7,8-tetrahydrofolate contacts are provided by residues 89–91 (SLI) and 139–143 (DENFD).

This sequence belongs to the Fmt family. In terms of assembly, homodimer.

The enzyme catalyses GDP-alpha-D-perosamine + (6R)-10-formyltetrahydrofolate = GDP-N-formyl-alpha-D-perosamine + (6S)-5,6,7,8-tetrahydrofolate + H(+). Its pathway is bacterial outer membrane biogenesis; lipopolysaccharide biosynthesis. Its function is as follows. Involved in the lipopolysaccharide (LPS) O-antigen biosynthesis. Catalyzes the transfer of a formyl group to GDP-perosamine, leading to the formation of GDP-N-formylperosamine. Is critical for full bacterial virulence. In Brucella abortus (strain 2308), this protein is GDP-perosamine N-formyltransferase.